The following is a 414-amino-acid chain: Tryptophan synthase beta chain (414 aa).

The disordered stretch occupies residues 1–28 (MVSTISRQDQNNNDDLNQPSKEGRFGKY). A compositionally biased stretch (low complexity) spans 8-18 (QDQNNNDDLNQ). Residue lysine 108 is modified to N6-(pyridoxal phosphate)lysine.

The protein belongs to the TrpB family. As to quaternary structure, tetramer of two alpha and two beta chains. It depends on pyridoxal 5'-phosphate as a cofactor.

It catalyses the reaction (1S,2R)-1-C-(indol-3-yl)glycerol 3-phosphate + L-serine = D-glyceraldehyde 3-phosphate + L-tryptophan + H2O. It participates in amino-acid biosynthesis; L-tryptophan biosynthesis; L-tryptophan from chorismate: step 5/5. Functionally, the beta subunit is responsible for the synthesis of L-tryptophan from indole and L-serine. The protein is Tryptophan synthase beta chain of Prochlorococcus marinus subsp. pastoris (strain CCMP1986 / NIES-2087 / MED4).